The chain runs to 209 residues: D-aminoacyl-tRNA deacylase 1 (209 aa).

The Mg(2+) site is built by V4, Q6, and C28. The Gly-cisPro motif, important for rejection of L-amino acids signature appears at 139–140 (GP). The segment at 142 to 209 (TIELESPAPG…EGDVSSEREP (68 aa)) is disordered. Basic and acidic residues-rich tracts occupy residues 159–170 (QLSKLEKQQQRK) and 181–194 (SSKERSAPRKEDRS). A phosphoserine mark is found at S197, S204, and S205.

It belongs to the DTD family. In terms of assembly, homodimer. Interacts with CDC45 and TOPBP1. Post-translationally, preferentially phosphorylated in cells arrested early in S phase. Phosphorylation in the C-terminus weakens the interaction with CDC45.

It is found in the nucleus. The protein resides in the cytoplasm. The enzyme catalyses glycyl-tRNA(Ala) + H2O = tRNA(Ala) + glycine + H(+). It carries out the reaction a D-aminoacyl-tRNA + H2O = a tRNA + a D-alpha-amino acid + H(+). An aminoacyl-tRNA editing enzyme that deacylates mischarged D-aminoacyl-tRNAs. Also deacylates mischarged glycyl-tRNA(Ala), protecting cells against glycine mischarging by AlaRS. Acts via tRNA-based rather than protein-based catalysis; rejects L-amino acids rather than detecting D-amino acids in the active site. By recycling D-aminoacyl-tRNA to D-amino acids and free tRNA molecules, this enzyme counteracts the toxicity associated with the formation of D-aminoacyl-tRNA entities in vivo and helps enforce protein L-homochirality. Functionally, ATPase involved in DNA replication, may facilitate loading of CDC45 onto pre-replication complexes. This is D-aminoacyl-tRNA deacylase 1 (DTD1) from Bos taurus (Bovine).